A 208-amino-acid chain; its full sequence is N-(5'-phosphoribosyl)anthranilate isomerase (208 aa).

The protein belongs to the TrpF family.

The catalysed reaction is N-(5-phospho-beta-D-ribosyl)anthranilate = 1-(2-carboxyphenylamino)-1-deoxy-D-ribulose 5-phosphate. Its pathway is amino-acid biosynthesis; L-tryptophan biosynthesis; L-tryptophan from chorismate: step 3/5. The protein is N-(5'-phosphoribosyl)anthranilate isomerase of Dechloromonas aromatica (strain RCB).